A 346-amino-acid chain; its full sequence is Transcription termination factor 4, mitochondrial (346 aa).

Residues 1-42 (MASLGRQVPEWHRLLALSWACLVRQTPHLREQKQMSPSLSCK) constitute a mitochondrion transit peptide. MTERF repeat units lie at residues 142–172 (FNAL…LGLG), 177–204 (KRVL…LREK), 209–239 (AQHI…YAYF), 245–270 (HLDI…YLER), and 290–318 (LRNI…VFKK). The interval 310–327 (VEEFQVFKKLLDQEEEEE) is dimerization with NSUN4. The disordered stretch occupies residues 321 to 346 (DQEEEEESESHASEEEEEEEEEEELL). Positions 322–346 (QEEEEESESHASEEEEEEEEEEELL) are enriched in acidic residues.

The protein belongs to the mTERF family. Heterodimer with NSUN4; this interaction may be required for NSUN4 recruitment to the mitochondrial large ribosomal subunit. As to expression, widely expressed, with highest levels in liver, followed by testis, kidney and brain.

It localises to the mitochondrion. Functionally, regulator of mitochondrial ribosome biogenesis and translation. Binds to mitochondrial ribosomal RNAs 16S, 12S and 7S. Targets NSUN4 RNA methyltransferase to the mitochondrial large ribosomal subunit. This is Transcription termination factor 4, mitochondrial (Mterf4) from Mus musculus (Mouse).